Consider the following 119-residue polypeptide: Large ribosomal subunit protein bL20 (119 aa).

The protein belongs to the bacterial ribosomal protein bL20 family.

In terms of biological role, binds directly to 23S ribosomal RNA and is necessary for the in vitro assembly process of the 50S ribosomal subunit. It is not involved in the protein synthesizing functions of that subunit. This is Large ribosomal subunit protein bL20 from Streptococcus equi subsp. equi (strain 4047).